The following is a 120-amino-acid chain: NAD(P)H-quinone oxidoreductase subunit 3, chloroplastic (120 aa).

The next 3 membrane-spanning stretches (helical) occupy residues 9–29 (IFWA…LISG), 64–84 (MFAL…PWAM), and 88–108 (VLGV…IVGL).

The protein belongs to the complex I subunit 3 family. As to quaternary structure, NDH is composed of at least 16 different subunits, 5 of which are encoded in the nucleus.

The protein localises to the plastid. It localises to the chloroplast thylakoid membrane. It carries out the reaction a plastoquinone + NADH + (n+1) H(+)(in) = a plastoquinol + NAD(+) + n H(+)(out). The catalysed reaction is a plastoquinone + NADPH + (n+1) H(+)(in) = a plastoquinol + NADP(+) + n H(+)(out). Its function is as follows. NDH shuttles electrons from NAD(P)H:plastoquinone, via FMN and iron-sulfur (Fe-S) centers, to quinones in the photosynthetic chain and possibly in a chloroplast respiratory chain. The immediate electron acceptor for the enzyme in this species is believed to be plastoquinone. Couples the redox reaction to proton translocation, and thus conserves the redox energy in a proton gradient. The sequence is that of NAD(P)H-quinone oxidoreductase subunit 3, chloroplastic from Populus alba (White poplar).